Consider the following 532-residue polypeptide: MGSILSRRIAGVEDIDIQANSAYRYPPKSGNYFASHFFMGGEKFDTPHPEGYLFGENMDLNFLGSRPVQFPYVTPAPHEPVKTLRSLVNIRKDSLRLVRYKEDADSPTEDGEKPRVLYSLEFTFDADARVAITIYCQAVEELVNGVAVYSCKNPSLQSETVHYKRGVSQQFSLPSFKIDFSEWKDDELNFDLDRGVFPVVIQAVVDEGDVVEVTGHAHVLLAAFEKHVDGSFSVKPLKQKQIVDRVSYLLQEIYGIENKNNQETKPSDDENSDNSSECVVCLSDLRDTLILPCRHLCLCTSCADTLRYQANNCPICRLPFRALLQIRAVRKKPGALSPISFSPVLAQSVDHDEHSSSDSIPPGYEPISLLEALNGLRAVSPAIPSAPLYEEITYSGISDGLSQASCPLAGLDRIMESGLQKGKTQSKSPDSTLRSPSFPIHEEDEEKLSEDSDAPLPPSGVELVLRESSSPESFGTEEGDEPSLKQGSRVPSIDDVLQDGSPQHHGCSQPVPPADIYLPALGPESCSVGIEE.

Gly2 is lipidated: N-myristoyl glycine. The RING-type zinc-finger motif lies at 277-316; it reads ECVVCLSDLRDTLILPCRHLCLCTSCADTLRYQANNCPIC. The Required for TSG101-binding motif lies at 384–387; sequence PSAP. Tyr389 is modified (phosphotyrosine). The tract at residues 419–518 is disordered; sequence LQKGKTQSKS…QPVPPADIYL (100 aa). Residues 422 to 435 are compositionally biased toward polar residues; it reads GKTQSKSPDSTLRS. Phosphoserine is present on residues Ser428, Ser449, Ser452, and Ser501. Positions 442–453 are enriched in acidic residues; sequence EEDEEKLSEDSD.

As to quaternary structure, interacts with MC1R and MC4R. Interacts with TSG101. Interacts with mislocalized cytosolically exposed PRNP; this interaction alters MGRN1 subcellular location and causes lysosomal enlargement. In terms of processing, autoubiquitinated in vitro. As to expression, widely expressed, with highest levels in brain, heart, kidney and liver. In the CNS, especially prominent in the Purkinje cells of the cerebellum. In the skin, expressed in the basal layer of the epidermis and hair follicles, primarily in the outer root sheath. Isoforms 1, 3, 4 and 5 are equally expressed in the liver. Isoforms 1, 3 and 4 are most abundant in brain, kidney and heart, respectively.

It is found in the early endosome. It localises to the cytoplasm. Its subcellular location is the cell membrane. The protein resides in the nucleus. The catalysed reaction is S-ubiquitinyl-[E2 ubiquitin-conjugating enzyme]-L-cysteine + [acceptor protein]-L-lysine = [E2 ubiquitin-conjugating enzyme]-L-cysteine + N(6)-ubiquitinyl-[acceptor protein]-L-lysine.. Its pathway is protein modification; protein ubiquitination. E3 ubiquitin-protein ligase. Mediates TSG101 monoubiquitination at multiple sites. Plays a role in the regulation of endosome-to-lysosome trafficking. Impairs MC1R- and MC4R-signaling by competing with GNAS-binding to MCRs and inhibiting agonist-induced cAMP production. Does not inhibit ADRB2-signaling. Does not promote MC1R ubiquitination. Also acts as a negative regulator of hedgehog signaling. This chain is E3 ubiquitin-protein ligase MGRN1 (Mgrn1), found in Mus musculus (Mouse).